Here is a 150-residue protein sequence, read N- to C-terminus: Large ribosomal subunit protein uL15 (150 aa).

The protein belongs to the universal ribosomal protein uL15 family. In terms of assembly, part of the 50S ribosomal subunit.

Binds to the 23S rRNA. This is Large ribosomal subunit protein uL15 from Rickettsia typhi (strain ATCC VR-144 / Wilmington).